The following is a 486-amino-acid chain: Cysteine--tRNA ligase (486 aa).

Cys29 is a binding site for Zn(2+). The 'HIGH' region motif lies at 31-41 (ITVYDYCHLGH). Cys215, His240, and Glu244 together coordinate Zn(2+). The short motif at 272–276 (KMSKS) is the 'KMSKS' region element. An ATP-binding site is contributed by Lys275.

It belongs to the class-I aminoacyl-tRNA synthetase family. In terms of assembly, monomer. It depends on Zn(2+) as a cofactor.

Its subcellular location is the cytoplasm. The enzyme catalyses tRNA(Cys) + L-cysteine + ATP = L-cysteinyl-tRNA(Cys) + AMP + diphosphate. The sequence is that of Cysteine--tRNA ligase from Gloeothece citriformis (strain PCC 7424) (Cyanothece sp. (strain PCC 7424)).